The primary structure comprises 236 residues: Aquaporin Z (236 aa).

The next 2 helical transmembrane spans lie at 12-32 (FFGT…AAGV) and 37-57 (IGYA…AYAV). The short motif at 66-68 (NPA) is the NPA 1 element. A run of 3 helical transmembrane segments spans residues 92 to 112 (VVGA…VAGF), 136 to 156 (AALI…LGAT), and 163 to 183 (GFAP…SIPV). The NPA 2 motif lies at 189–191 (NPA). The chain crosses the membrane as a helical span at residues 197–217 (ALFVGGWALEQLWLFWLAPIA).

The protein belongs to the MIP/aquaporin (TC 1.A.8) family. As to quaternary structure, homotetramer.

The protein resides in the cell inner membrane. It catalyses the reaction H2O(in) = H2O(out). Channel that permits osmotically driven movement of water in both directions. It is involved in the osmoregulation and in the maintenance of cell turgor during volume expansion in rapidly growing cells. It mediates rapid entry or exit of water in response to abrupt changes in osmolarity. In Bordetella bronchiseptica (strain ATCC BAA-588 / NCTC 13252 / RB50) (Alcaligenes bronchisepticus), this protein is Aquaporin Z.